A 448-amino-acid chain; its full sequence is Phosphoglucosamine mutase (448 aa).

Serine 100 acts as the Phosphoserine intermediate in catalysis. Positions 100, 240, 242, and 244 each coordinate Mg(2+). At serine 100 the chain carries Phosphoserine.

Belongs to the phosphohexose mutase family. Mg(2+) serves as cofactor. Activated by phosphorylation.

It catalyses the reaction alpha-D-glucosamine 1-phosphate = D-glucosamine 6-phosphate. Its function is as follows. Catalyzes the conversion of glucosamine-6-phosphate to glucosamine-1-phosphate. The protein is Phosphoglucosamine mutase of Bacillus anthracis (strain A0248).